Reading from the N-terminus, the 148-residue chain is Deoxyuridine 5'-triphosphate nucleotidohydrolase (148 aa).

Substrate is bound by residues 68–70 (RSG), Asn81, 85–87 (TID), and Lys95.

This sequence belongs to the dUTPase family. It depends on Mg(2+) as a cofactor.

The catalysed reaction is dUTP + H2O = dUMP + diphosphate + H(+). The protein operates within pyrimidine metabolism; dUMP biosynthesis; dUMP from dCTP (dUTP route): step 2/2. Its function is as follows. This enzyme is involved in nucleotide metabolism: it produces dUMP, the immediate precursor of thymidine nucleotides and it decreases the intracellular concentration of dUTP so that uracil cannot be incorporated into DNA. The protein is Deoxyuridine 5'-triphosphate nucleotidohydrolase of Rickettsia massiliae (strain Mtu5).